The sequence spans 327 residues: MTNEVKENTPLLNAIGLKKYYPVKKGLFAKPQQVKALDGVSFQLERGKTLAVVGESGCGKSTLGRLLTMIEEPTKGELYYKGHNFLENDSETKALRRKKIQIVFQNPYASLNPRKKIGSILEEPLIINTKLSAKERREKVLSMMEKVGLRAEFYDRYPHMFSGGQRQRIAIARGLMLDPDVVVADEPVSALDVSVRAQVLNLMMDLQDELGLSYVFISHDLSVVEHIADEVMVMYLGRCIEKGTTEQIFSNPQHPYTKALLSATPRLSPNLRRERIKLTGELPSPINPPKGCAFNPRCWKATEKCRENQPHLEQHTDGKLIACFHID.

One can recognise an ABC transporter domain in the interval 12-261 (LNAIGLKKYY…PQHPYTKALL (250 aa)). 54 to 61 (GESGCGKS) provides a ligand contact to ATP.

Belongs to the ABC transporter superfamily.

The protein resides in the cell inner membrane. The enzyme catalyses a dipeptide(out) + ATP + H2O = a dipeptide(in) + ADP + phosphate + H(+). In terms of biological role, part of the ABC transporter DppBCDF involved in dipeptide transport. Responsible for energy coupling to the transport system. This Haemophilus influenzae (strain ATCC 51907 / DSM 11121 / KW20 / Rd) protein is Dipeptide transport ATP-binding protein DppF (dppF).